A 288-amino-acid polypeptide reads, in one-letter code: Extracellular ribonuclease (288 aa).

An N-terminal signal peptide occupies residues 1 to 26 (MTKKAWFLPLVCVLLISGWLAPAASA).

It is found in the secreted. Mg(2+)-activated ribonuclease which hydrolyzes RNA apparently nonspecifically into oligonucleotides with 5'-terminal phosphate. The protein is Extracellular ribonuclease (bsn) of Bacillus subtilis (strain 168).